The sequence spans 177 residues: MSKKKDQVLLNEQIDAPEVRCVGDDGTQYGIVSRDEALKIAEQKGLDLVLIAPNANPPVCKIMDYGKFKYQQEKKLKEAKKKQTKIEVKEIKLSVKIAQNDIDYKVKHAREFLEKGKHVKFRVFLRGREMAHPEAGVEVLEKIIPLIEDIGVVEKKPHLEGRYVNMLVIPKKEEKKK.

This sequence belongs to the IF-3 family. In terms of assembly, monomer.

It localises to the cytoplasm. Functionally, IF-3 binds to the 30S ribosomal subunit and shifts the equilibrium between 70S ribosomes and their 50S and 30S subunits in favor of the free subunits, thus enhancing the availability of 30S subunits on which protein synthesis initiation begins. The chain is Translation initiation factor IF-3 from Nitratiruptor sp. (strain SB155-2).